The sequence spans 89 residues: Acylphosphatase (89 aa).

One can recognise an Acylphosphatase-like domain in the interval 3 to 89 (ALFIKISGRV…QNFTSFDIVP (87 aa)). Catalysis depends on residues R18 and N36.

The protein belongs to the acylphosphatase family.

It carries out the reaction an acyl phosphate + H2O = a carboxylate + phosphate + H(+). In Pseudothermotoga lettingae (strain ATCC BAA-301 / DSM 14385 / NBRC 107922 / TMO) (Thermotoga lettingae), this protein is Acylphosphatase (acyP).